The chain runs to 206 residues: uncharacterized protein (206 aa).

Residues 1-22 (MPKLRLIGLTLLALSATAVSHA) form the signal peptide. Positions 23–89 (EETRYVSDEL…IPLKQLSTEP (67 aa)) constitute an SH3b domain. A helical membrane pass occupies residues 169-191 (IIMQWFMYGGGVLGLGLLLGLVL).

The protein to H.influenzae HI_1605.

It localises to the membrane. This is an uncharacterized protein from Escherichia coli O157:H7.